A 357-amino-acid chain; its full sequence is bZIP transcription factor 23 (357 aa).

The segment at 166 to 185 (PPVPPAPTPTAAAVPPPPPP) is disordered. In terms of domain architecture, bZIP spans 275–338 (VERRQRRMIK…KNEVLERMSR (64 aa)). A basic motif region spans residues 277-296 (RRQRRMIKNRESAARSRQRK). Positions 303-317 (LEAEVAKLKELNDEL) are leucine-zipper.

The protein belongs to the bZIP family. ABI5 subfamily. In terms of tissue distribution, highly expressed in leaves.

Its subcellular location is the nucleus. Transcriptional activator that mediates abscisic acid (ABA) signaling. Can regulate the expression of a wide spectrum of stress-related genes in response to abiotic stresses through an ABA-dependent regulation pathway. Confers ABA-dependent drought and salinity tolerance. Binds specifically to the ABA-responsive elements (ABRE) in the promoter of target genes to mediate stress-responsive ABA signaling. The sequence is that of bZIP transcription factor 23 from Oryza sativa subsp. japonica (Rice).